Here is a 351-residue protein sequence, read N- to C-terminus: O-methyltransferase apf6 (351 aa).

Residues 231 to 232, 279 to 280, and Arg-295 each bind S-adenosyl-L-methionine; these read GG and NF. His-299 serves as the catalytic Proton acceptor.

This sequence belongs to the class I-like SAM-binding methyltransferase superfamily. Cation-independent O-methyltransferase family.

It participates in secondary metabolite biosynthesis. O-methyltransferase; part of the gene cluster that mediates the biosynthesis of the cyclic tetrapeptide apicidin F (APF). The non-ribosomal peptide synthetase apf1 incorporates four different amino acids to produce apicidin F: L-phenylalanine, D-pipecolic acid (D-pip), N-methoxy-L-tryptophan and L-2-aminooctanedioic acid. L-Phenylalanine is the only proteinogenic amino acid directly used by apf1. The 3 other apf1 substrates are non-proteinogenic and have to be modified by other enzymes of the cluster. Lysine is converted to delta-1-pyrroline-5-carboxylate (P5C) which is reduced to L-pipecolic acid (L-pip) by apf3. L-pip is epimerized to D-pip, probably by apf1 activity, prior to incorporation. L-Tryptophan is N-oxidyzed by one of the cytochrome P450 monooxygenases (apf7 or apf8), and further methylated at the hydroxy group by the O-methyltransferase apf6 to yield N-methoxy-L-tryptophan. The synthesis of the fourth apf1 substrate is more complex. The fatty acid synthase apf5 is involved in the synthesis of the octanoic acid backbone of L-2-aminooctanedioic acid by fixing one acetyl-CoA unit and three malonyl-CoA units. Then one of the cytochrome P450 monooxygenases (apf7 or apf8) may oxidize this backbone to 2-oxooctanoic acid. The aminotransferase apf4 is predicted to catalyze the exchange of the keto group with an amino group. The next step would be the oxidation of 2-aminooctanoic acid by one of the cytochrome P450 monooxygenases (apf7 or apf8). The last step is the oxidation of 2-amino-8-hydroxyoctanoic acid to 2-aminooctanedioic acid is catalyzed by the FAD-dependent monooxygenase apf9. The protein is O-methyltransferase apf6 of Gibberella fujikuroi (strain CBS 195.34 / IMI 58289 / NRRL A-6831) (Bakanae and foot rot disease fungus).